A 91-amino-acid chain; its full sequence is Small ribosomal subunit protein uS19 (91 aa).

It belongs to the universal ribosomal protein uS19 family.

Protein S19 forms a complex with S13 that binds strongly to the 16S ribosomal RNA. This chain is Small ribosomal subunit protein uS19, found in Amoebophilus asiaticus (strain 5a2).